We begin with the raw amino-acid sequence, 156 residues long: Phosphopantetheine adenylyltransferase (156 aa).

Thr-10 contributes to the substrate binding site. Residues 10–11 (TF) and His-18 contribute to the ATP site. The substrate site is built by Lys-42, Leu-74, and Arg-88. ATP-binding positions include 89–91 (GLR), Glu-99, and 124–130 (NAFISSS).

Belongs to the bacterial CoaD family. As to quaternary structure, homohexamer. Mg(2+) serves as cofactor.

It localises to the cytoplasm. It catalyses the reaction (R)-4'-phosphopantetheine + ATP + H(+) = 3'-dephospho-CoA + diphosphate. Its pathway is cofactor biosynthesis; coenzyme A biosynthesis; CoA from (R)-pantothenate: step 4/5. Reversibly transfers an adenylyl group from ATP to 4'-phosphopantetheine, yielding dephospho-CoA (dPCoA) and pyrophosphate. This is Phosphopantetheine adenylyltransferase from Campylobacter concisus (strain 13826).